The sequence spans 627 residues: Membrane protein insertase YidC (627 aa).

6 helical membrane passes run 3–23 (KNTV…SWLN), 376–396 (WGLI…PLAY), 450–470 (LPML…PTTI), 502–522 (FYGN…ILYI), 534–554 (EGMA…LFFF), and 558–578 (ASGL…QYMS).

Belongs to the OXA1/ALB3/YidC family. Type 1 subfamily. As to quaternary structure, interacts with the Sec translocase complex via SecD. Specifically interacts with transmembrane segments of nascent integral membrane proteins during membrane integration.

The protein localises to the cell inner membrane. Required for the insertion and/or proper folding and/or complex formation of integral membrane proteins into the membrane. Involved in integration of membrane proteins that insert both dependently and independently of the Sec translocase complex, as well as at least some lipoproteins. Aids folding of multispanning membrane proteins. The polypeptide is Membrane protein insertase YidC (Porphyromonas gingivalis (strain ATCC 33277 / DSM 20709 / CIP 103683 / JCM 12257 / NCTC 11834 / 2561)).